Consider the following 317-residue polypeptide: Protein phosphatase 1 regulatory subunit 3C (317 aa).

Positions 84 to 87 (RVVF) match the PP1-binding motif motif. The interval 141 to 263 (PSSDYLSFRD…YRIVHVQWKP (123 aa)) is interaction with EPM2A. A CBM21 domain is found at 149-257 (RDRFQKNFVC…NNEAQNYRIV (109 aa)).

In terms of assembly, interacts with PPP1CC catalytic subunit of PP1 and associates with glycogen. Forms complexes with glycogen phosphorylase, glycogen synthase and phosphorylase kinase which is necessary for its regulation of PP1 activity. Also interacts with EPM2A/laforin. In terms of processing, ubiquitinated by NHLRC1/malin in a EPM2A/laforin-dependent manner.

Acts as a glycogen-targeting subunit for PP1 and regulates its activity. Activates glycogen synthase, reduces glycogen phosphorylase activity and limits glycogen breakdown. Dramatically increases basal and insulin-stimulated glycogen synthesis upon overexpression in a variety of cell types. This Rattus norvegicus (Rat) protein is Protein phosphatase 1 regulatory subunit 3C.